The primary structure comprises 1111 residues: uncharacterized protein (1111 aa).

Residues 1–31 (MIRKLMKIPPFFTALFASAMFTLSVSQGVLA) form the signal peptide. A run of 11 helical transmembrane segments spans residues 490–510 (LPYL…IFKF), 538–558 (LALL…LAVC), 572–592 (FWHW…WISL), 620–640 (IIVV…TDAG), 644–664 (DVLG…IIAP), 694–714 (IPVG…LNLI), 797–817 (FIWT…VTVV), 840–860 (SITL…YVLV), 885–905 (ITTL…FATL), 922–942 (GLGF…ILLF), and 1003–1023 (LVIS…QLLL).

It belongs to the MscS (TC 1.A.23) family.

Its subcellular location is the cell membrane. This is an uncharacterized protein from Haemophilus influenzae (strain ATCC 51907 / DSM 11121 / KW20 / Rd).